The chain runs to 248 residues: Triosephosphate isomerase (248 aa).

14-16 contacts substrate; it reads NWK. The active-site Electrophile is the histidine 99. The active-site Proton acceptor is the glutamate 170. Substrate-binding positions include glycine 176, serine 212, and 233 to 234; that span reads GG.

It belongs to the triosephosphate isomerase family. As to quaternary structure, homodimer.

It localises to the cytoplasm. It catalyses the reaction D-glyceraldehyde 3-phosphate = dihydroxyacetone phosphate. The protein operates within carbohydrate biosynthesis; gluconeogenesis. It participates in carbohydrate degradation; glycolysis; D-glyceraldehyde 3-phosphate from glycerone phosphate: step 1/1. Functionally, involved in the gluconeogenesis. Catalyzes stereospecifically the conversion of dihydroxyacetone phosphate (DHAP) to D-glyceraldehyde-3-phosphate (G3P). The polypeptide is Triosephosphate isomerase (Bordetella bronchiseptica (strain ATCC BAA-588 / NCTC 13252 / RB50) (Alcaligenes bronchisepticus)).